The sequence spans 378 residues: Probable endopolygalacturonase AFUB_016610 (378 aa).

A signal peptide spans methionine 1–alanine 19. Residues serine 20 to arginine 35 constitute a propeptide that is removed on maturation. Cysteine 38 and cysteine 56 are joined by a disulfide. PbH1 repeat units lie at residues threonine 147–glycine 169, cysteine 170–serine 200, and serine 201–serine 222. The Proton donor role is filled by aspartate 215. Cysteine 217 and cysteine 233 are joined by a disulfide. Residue histidine 237 is part of the active site. PbH1 repeat units follow at residues valine 252–alanine 273 and isoleucine 281–glutamine 303. N-linked (GlcNAc...) asparagine glycosylation is present at asparagine 254. Asparagine 327 carries N-linked (GlcNAc...) asparagine glycosylation. Cysteine 345 and cysteine 350 form a disulfide bridge. Asparagine 352 carries N-linked (GlcNAc...) asparagine glycosylation. A disulfide bond links cysteine 369 and cysteine 378.

Belongs to the glycosyl hydrolase 28 family.

The protein resides in the secreted. It catalyses the reaction (1,4-alpha-D-galacturonosyl)n+m + H2O = (1,4-alpha-D-galacturonosyl)n + (1,4-alpha-D-galacturonosyl)m.. Its function is as follows. Involved in maceration and soft-rotting of plant tissue. Hydrolyzes the 1,4-alpha glycosidic bonds of de-esterified pectate in the smooth region of the plant cell wall. The chain is Probable endopolygalacturonase AFUB_016610 from Aspergillus fumigatus (strain CBS 144.89 / FGSC A1163 / CEA10) (Neosartorya fumigata).